Reading from the N-terminus, the 119-residue chain is Phosphoribosyl-AMP cyclohydrolase (119 aa).

Asp-77 provides a ligand contact to Mg(2+). Cys-78 is a Zn(2+) binding site. Mg(2+)-binding residues include Asp-79 and Asp-81. Zn(2+) is bound by residues Cys-94 and Cys-101.

This sequence belongs to the PRA-CH family. In terms of assembly, homodimer. The cofactor is Mg(2+). It depends on Zn(2+) as a cofactor.

It is found in the cytoplasm. It catalyses the reaction 1-(5-phospho-beta-D-ribosyl)-5'-AMP + H2O = 1-(5-phospho-beta-D-ribosyl)-5-[(5-phospho-beta-D-ribosylamino)methylideneamino]imidazole-4-carboxamide. The protein operates within amino-acid biosynthesis; L-histidine biosynthesis; L-histidine from 5-phospho-alpha-D-ribose 1-diphosphate: step 3/9. Catalyzes the hydrolysis of the adenine ring of phosphoribosyl-AMP. In Cereibacter sphaeroides (strain ATCC 17029 / ATH 2.4.9) (Rhodobacter sphaeroides), this protein is Phosphoribosyl-AMP cyclohydrolase.